Reading from the N-terminus, the 236-residue chain is MKLNISYPINGTQKCIEIDDEHRVRVFYDKRIGQEVDGESVGDEFKGYVFKIAGGNDKQGFPMKQGVLLPTRVKLLLAKGHSCYRPRRNGERKRKSVRGAIVGPDLAVLALIITKKGEQEIEGITNDTVPKRLGPKRANNIRKFFGLTKEDDVRDYVIRREVTKGDKSYTKAPKIQRLVTPQRLQRKRQQKSLKIKNAQAQREAAAEYAQLLAKRLSERKAEKAEVRKRRASSLKA.

A phosphoserine mark is found at serine 232 and serine 233.

This sequence belongs to the eukaryotic ribosomal protein eS6 family. In terms of processing, phosphorylated.

The sequence is that of Small ribosomal subunit protein eS6 (RPS6) from Kluyveromyces lactis (strain ATCC 8585 / CBS 2359 / DSM 70799 / NBRC 1267 / NRRL Y-1140 / WM37) (Yeast).